Reading from the N-terminus, the 319-residue chain is tRNA uridine(34) hydroxylase (319 aa).

The Rhodanese domain occupies 127-221 (KQEDTVIIDA…YGKDPEVQGE (95 aa)). Cys181 acts as the Cysteine persulfide intermediate in catalysis.

Belongs to the TrhO family.

It catalyses the reaction uridine(34) in tRNA + AH2 + O2 = 5-hydroxyuridine(34) in tRNA + A + H2O. Its function is as follows. Catalyzes oxygen-dependent 5-hydroxyuridine (ho5U) modification at position 34 in tRNAs. The chain is tRNA uridine(34) hydroxylase from Bacillus cereus (strain G9842).